Here is a 199-residue protein sequence, read N- to C-terminus: 7-methyl-GTP pyrophosphatase (199 aa).

The active-site Proton acceptor is the Asp-76.

This sequence belongs to the Maf family. YceF subfamily. It depends on a divalent metal cation as a cofactor.

It is found in the cytoplasm. It catalyses the reaction N(7)-methyl-GTP + H2O = N(7)-methyl-GMP + diphosphate + H(+). Functionally, nucleoside triphosphate pyrophosphatase that hydrolyzes 7-methyl-GTP (m(7)GTP). May have a dual role in cell division arrest and in preventing the incorporation of modified nucleotides into cellular nucleic acids. The sequence is that of 7-methyl-GTP pyrophosphatase from Brucella abortus biovar 1 (strain 9-941).